Reading from the N-terminus, the 471-residue chain is Alpha-1,3/1,6-mannosyltransferase alg-2 (471 aa).

N-linked (GlcNAc...) asparagine glycans are attached at residues Asn178 and Asn279. A helical membrane pass occupies residues 446–466; the sequence is GMILLVVGAAVAAVAGVISAV.

This sequence belongs to the glycosyltransferase group 1 family. Glycosyltransferase 4 subfamily.

It localises to the endoplasmic reticulum membrane. It catalyses the reaction a beta-D-Man-(1-&gt;4)-beta-D-GlcNAc-(1-&gt;4)-alpha-D-GlcNAc-diphospho-di-trans,poly-cis-dolichol + GDP-alpha-D-mannose = an alpha-D-Man-(1-&gt;3)-beta-D-Man-(1-&gt;4)-beta-D-GlcNAc-(1-&gt;4)-alpha-D-GlcNAc-diphospho-di-trans,poly-cis-dolichol + GDP + H(+). It carries out the reaction an alpha-D-Man-(1-&gt;3)-beta-D-Man-(1-&gt;4)-beta-D-GlcNAc-(1-&gt;4)-alpha-D-GlcNAc-diphospho-di-trans,poly-cis-dolichol + GDP-alpha-D-mannose = an alpha-D-Man-(1-&gt;3)-[alpha-D-Man-(1-&gt;6)]-beta-D-Man-(1-&gt;4)-beta-D-GlcNAc-(1-&gt;4)-alpha-D-GlcNAc-diphospho-di-trans,poly-cis-dolichol + GDP + H(+). It participates in protein modification; protein glycosylation. Functionally, mannosylates Man(2)GlcNAc(2)-dolichol diphosphate and Man(1)GlcNAc(2)-dolichol diphosphate to form Man(3)GlcNAc(2)-dolichol diphosphate. This chain is Alpha-1,3/1,6-mannosyltransferase alg-2 (alg-2), found in Neurospora crassa (strain ATCC 24698 / 74-OR23-1A / CBS 708.71 / DSM 1257 / FGSC 987).